The sequence spans 106 residues: Replication restart protein PriB (106 aa).

The 100-residue stretch at methionine 4–aspartate 103 folds into the SSB domain.

Belongs to the PriB family. As to quaternary structure, homodimer. Interacts with PriA and DnaT. Component of the replication restart primosome. Primosome assembly occurs via a 'hand-off' mechanism. PriA binds to replication forks, subsequently PriB then DnaT bind; DnaT then displaces ssDNA to generate the helicase loading substrate.

Involved in the restart of stalled replication forks, which reloads the replicative helicase on sites other than the origin of replication; the PriA-PriB pathway is the major replication restart pathway. During primosome assembly it facilitates complex formation between PriA and DnaT on DNA; stabilizes PriA on DNA. Stimulates the DNA unwinding activity of PriA helicase. The sequence is that of Replication restart protein PriB from Pectobacterium atrosepticum (strain SCRI 1043 / ATCC BAA-672) (Erwinia carotovora subsp. atroseptica).